We begin with the raw amino-acid sequence, 962 residues long: MTKQTLTQLEQHDLFLRRHIGPDSSQQQAMLNYVGAESLDDLTAQIVPESIRLSQELSIGDSCGEAEGIAYIRGLAKQNQVFKSYIGMGYYGTQVPNVILRNVLENPGWYTAYTPYQPEIAQGRLEAILNFQQVSMDLTGLDLASASLLDEATAAAEAMALAKRVSKAKKANIFFVADDVFPQTLDVVKTRAECFGFEVVVGPASEAVNHELFGALFQYTNRFGQITDFTELFAELRAKNVIVTVAADIMSLVLLKSPGAMGADVVFGSAQRFGVPMGFGGPHAAFFVARDEHKRSMPGRIIGVSKDARGNRALRMAMQTREQHIRREKANSNICTAQILLANMASFYAVFHGPDGLKTIASRIHRFADILAAGLQAKGVSLVNSTWFDTLSIKGLDVAAVNARALAAEMNLRFDADGTVGVSLDETTLRTDIDALFDVILGAGHGLDVAALDAQIVAQGSQSIPAALVRQDAILSHPTFNRYQSETEMMRYIKRLESKDLALNYSMISLGSCTMKLNAAVEMIPVSWPEFANMHPFCPLDQAKGYTQLIEELSSWLVNVTGYDAVCIQPNSGAQGEYAGLLAIKKYHESRGDAHRNICLIPQSAHGTNPASAQLAGMQVVVTACDKQGNVDLEDLKTKAAEVAENLSCIMITYPSTHGVYEESIREICDIVHQHGGQVYLDGANMNAQVGLTSPGFIGADVSHLNLHKTFAIPHGGGGPGMGPIGVKSHLAPFVAGHVVVKPGRVSDNNGAVSAAPYGSAGILPISWMYIKLLGSNGLKKSTQTALLNANYVMKKLSEHYPVLFRGRNDRVAHECIIDLRPLKEASGVTEMDIAKRLNDYGFHAPTMSFPVAGTLMIEPTESESKVELDRFIDAMVSIRAEIAKVESGEWPADNNPLHNAPHTMADIMDPEFDTRPYSREVAVFPSAAVRTNKFWPTVNRIDDVYGDRNLMCSCAPLSDYE.

Lys709 carries the N6-(pyridoxal phosphate)lysine modification.

The protein belongs to the GcvP family. As to quaternary structure, the glycine cleavage system is composed of four proteins: P, T, L and H. It depends on pyridoxal 5'-phosphate as a cofactor.

It catalyses the reaction N(6)-[(R)-lipoyl]-L-lysyl-[glycine-cleavage complex H protein] + glycine + H(+) = N(6)-[(R)-S(8)-aminomethyldihydrolipoyl]-L-lysyl-[glycine-cleavage complex H protein] + CO2. Its function is as follows. The glycine cleavage system catalyzes the degradation of glycine. The P protein binds the alpha-amino group of glycine through its pyridoxal phosphate cofactor; CO(2) is released and the remaining methylamine moiety is then transferred to the lipoamide cofactor of the H protein. In Shewanella putrefaciens (strain CN-32 / ATCC BAA-453), this protein is Glycine dehydrogenase (decarboxylating).